We begin with the raw amino-acid sequence, 387 residues long: EARP-interacting protein homolog (387 aa).

WD repeat units follow at residues 132-172 (SAHG…AKAT), 182-222 (KGQL…QIYC), 226-266 (AHGQ…EPVK), and 270-310 (EHSH…SEPF). A disordered region spans residues 309–337 (PFGHLVDDDDLSDPEENQQEDKGKEPLQD). Acidic residues predominate over residues 315-326 (DDDDLSDPEENQ). Residues 345–385 (EHEDSVYAVEWSAADPWLFASLSYDGRLVINRVPRALKYRI) form a WD 5 repeat.

The protein belongs to the WD repeat EIPR1 family.

Its subcellular location is the golgi apparatus. The protein resides in the trans-Golgi network. In terms of biological role, may act as a component of endosomal retrieval machinery that is involved in protein transport from early endosomes to either recycling endosomes or the trans-Golgi network. The chain is EARP-interacting protein homolog from Danio rerio (Zebrafish).